The chain runs to 2067 residues: Negative regulator of mitosis (2067 aa).

Residues 100–118 show a composition bias toward polar residues; the sequence is SLAIPQTTSQQSNRPSGSE. Disordered regions lie at residues 100-132, 332-408, and 452-480; these read SLAI…STSK, ESIP…DDFA, and GSQS…GFNP. The short motif at 336–347 is the Nuclear localization signal element; it reads SHRKKKRRDTGG. Positions 336-355 are enriched in basic residues; sequence SHRKKKRRDTGGTRSKRRSS. Over residues 384-396 the composition is skewed to polar residues; it reads WNASVMSHSQYST. PC repeat units lie at residues 1434-1465, 1482-1520, 1532-1562, and 1625-1659; these read AGIM…ADQE, AAGF…TKNV, GATI…TVRF, and GLCF…ISRL. Residues 2020–2042 are disordered; the sequence is FPSESDEEKRDRQETGSMPSSGH.

This sequence belongs to the APC1 family.

Its function is as follows. Negative regulator of mitosis in E.nidulans. This protein is part of a regulatory pathway that includes the nimA protein kinase. It is required to prevent premature entry into mitosis. Mutations to this protein both cause cells to enter mitosis and prevent them from leaving mitosis. The protein is Negative regulator of mitosis (bimE) of Emericella nidulans (strain FGSC A4 / ATCC 38163 / CBS 112.46 / NRRL 194 / M139) (Aspergillus nidulans).